The sequence spans 589 residues: Probable 9-cis-epoxycarotenoid dioxygenase NCED5, chloroplastic (589 aa).

The N-terminal 45 residues, 1–45, are a transit peptide targeting the chloroplast; the sequence is MACSYILTPNPTKLNLSFAPSDLDAPSPSSSVSFTNTKPRRRKLS. The span at 21–34 shows a compositional bias: low complexity; it reads SDLDAPSPSSSVSF. A disordered region spans residues 21–51; sequence SDLDAPSPSSSVSFTNTKPRRRKLSANSVSD. Residues His287, His336, His401, and His576 each contribute to the Fe cation site.

Belongs to the carotenoid oxygenase family. In terms of assembly, interacts in vitro with VAR3. The cofactor is Fe(2+). In terms of tissue distribution, detected only in seeds.

It localises to the plastid. The protein resides in the chloroplast thylakoid membrane. It carries out the reaction a 9-cis-epoxycarotenoid + O2 = a 12'-apo-carotenal + 2-cis,4-trans-xanthoxin. It catalyses the reaction 9-cis-violaxanthin + O2 = (3S,5R,6S)-5,6-epoxy-3-hydroxy-5,6-dihydro-12'-apo-beta-caroten-12'-al + 2-cis,4-trans-xanthoxin. The enzyme catalyses 9'-cis-neoxanthin + O2 = (3S,5R,6R)-3,5-dihydroxy-6,7-didehydro-5,6-dihydro-12'-apo-beta-caroten-12'-al + 2-cis,4-trans-xanthoxin. Functionally, has a 11,12(11',12') 9-cis epoxycarotenoid cleavage activity. Catalyzes the first step of abscisic-acid biosynthesis from carotenoids. This chain is Probable 9-cis-epoxycarotenoid dioxygenase NCED5, chloroplastic (NCED5), found in Arabidopsis thaliana (Mouse-ear cress).